A 115-amino-acid chain; its full sequence is Ribonuclease P protein component (115 aa).

This sequence belongs to the RnpA family. In terms of assembly, consists of a catalytic RNA component (M1 or rnpB) and a protein subunit.

It catalyses the reaction Endonucleolytic cleavage of RNA, removing 5'-extranucleotides from tRNA precursor.. RNaseP catalyzes the removal of the 5'-leader sequence from pre-tRNA to produce the mature 5'-terminus. It can also cleave other RNA substrates such as 4.5S RNA. The protein component plays an auxiliary but essential role in vivo by binding to the 5'-leader sequence and broadening the substrate specificity of the ribozyme. The sequence is that of Ribonuclease P protein component from Phytoplasma australiense.